A 292-amino-acid chain; its full sequence is MTSVYESLLSDYPDKGVIGKPEIRDTETEIIEKLRTLYNHFVQAKQTGKPIFVLIGAGVSTGSKLPDFRGKQGVWTLQAEGKHAEGVDFQVARPGVSHKSILALHKAGYIKTIITQNVDGLDRKVGIPVEDLIEVHGNLFLEVCQSCFSEYVREEIVMSVGLCPTGRNCEGNKRTGRSCRGKLRDATLDWDTEISLNHLDRIRKAWKQTSHLLCIGTSLEIIPMGSLPLDAKSKGIKTTTINYQETAHEKIVETAIHADVKLILYSLCNALGVNVDLGDDLPDEVPIPLKIS.

A Deacetylase sirtuin-type domain is found at 31–292 (IEKLRTLYNH…DEVPIPLKIS (262 aa)). NAD(+) is bound by residues 56–75 (GAGV…QGVW) and 116–119 (QNVD). H136 (proton acceptor) is an active-site residue. The Zn(2+) site is built by C144, C147, C163, and C169. NAD(+) contacts are provided by residues 216–218 (GTS), 242–244 (NYQ), and V260.

The protein belongs to the sirtuin family. Class IV subfamily. Zn(2+) is required as a cofactor.

The enzyme catalyses N(6)-acetyl-L-lysyl-[protein] + NAD(+) + H2O = 2''-O-acetyl-ADP-D-ribose + nicotinamide + L-lysyl-[protein]. NAD-dependent protein deacetylase. The chain is NAD-dependent protein deacetylase sir-2.4 (sir-2.4) from Caenorhabditis elegans.